We begin with the raw amino-acid sequence, 177 residues long: Calcineurin subunit B (177 aa).

4 consecutive EF-hand domains span residues 25 to 60 (KEIK…AVNP), 62 to 92 (VKRV…FNAQ), 94 to 129 (DKQR…MVGN), and 135 to 170 (QLQQ…QDLE). Ca(2+)-binding residues include D38, D40, N42, T44, E49, D70, N72, D74, S76, E81, D107, D109, D111, Y113, E118, D148, D150, D152, K154, and E159.

The protein belongs to the calcineurin regulatory subunit family. As to quaternary structure, composed of a catalytic subunit (A) and a regulatory subunit (B).

Functionally, regulatory subunit of calcineurin, a calcium-dependent, calmodulin stimulated protein phosphatase. Confers calcium sensitivity. The chain is Calcineurin subunit B (CNB1) from Naegleria gruberi (Amoeba).